A 689-amino-acid polypeptide reads, in one-letter code: DNA topoisomerase 1 (689 aa).

In terms of domain architecture, Toprim spans Asp-3 to Ile-113. Positions 9 and 82 each coordinate Mg(2+). The region spanning Glu-129–Glu-557 is the Topo IA-type catalytic domain. An interaction with DNA region spans residues Ser-163 to Gln-168. The active-site O-(5'-phospho-DNA)-tyrosine intermediate is Tyr-298. Positions Ser-328–Met-357 are disordered. 3 consecutive C4-type zinc fingers follow at residues Cys-577–Cys-603, Cys-617–Cys-645, and Cys-658–Cys-681.

This sequence belongs to the type IA topoisomerase family. In terms of assembly, monomer. It depends on Mg(2+) as a cofactor.

The catalysed reaction is ATP-independent breakage of single-stranded DNA, followed by passage and rejoining.. Releases the supercoiling and torsional tension of DNA, which is introduced during the DNA replication and transcription, by transiently cleaving and rejoining one strand of the DNA duplex. Introduces a single-strand break via transesterification at a target site in duplex DNA. The scissile phosphodiester is attacked by the catalytic tyrosine of the enzyme, resulting in the formation of a DNA-(5'-phosphotyrosyl)-enzyme intermediate and the expulsion of a 3'-OH DNA strand. The free DNA strand then undergoes passage around the unbroken strand, thus removing DNA supercoils. Finally, in the religation step, the DNA 3'-OH attacks the covalent intermediate to expel the active-site tyrosine and restore the DNA phosphodiester backbone. The polypeptide is DNA topoisomerase 1 (Staphylococcus aureus).